The primary structure comprises 136 residues: Large ribosomal subunit protein uL16 (136 aa).

The protein belongs to the universal ribosomal protein uL16 family. In terms of assembly, part of the 50S ribosomal subunit.

Binds 23S rRNA and is also seen to make contacts with the A and possibly P site tRNAs. This chain is Large ribosomal subunit protein uL16, found in Histophilus somni (strain 129Pt) (Haemophilus somnus).